The following is a 155-amino-acid chain: Pathogenesis-related protein 2 (155 aa).

This sequence belongs to the BetVI family.

The protein is Pathogenesis-related protein 2 of Phaseolus vulgaris (Kidney bean).